A 103-amino-acid polypeptide reads, in one-letter code: ATP-dependent Clp protease adapter protein ClpS (103 aa).

It belongs to the ClpS family. As to quaternary structure, binds to the N-terminal domain of the chaperone ClpA.

In terms of biological role, involved in the modulation of the specificity of the ClpAP-mediated ATP-dependent protein degradation. This Neisseria meningitidis serogroup A / serotype 4A (strain DSM 15465 / Z2491) protein is ATP-dependent Clp protease adapter protein ClpS.